The following is a 225-amino-acid chain: UPF0173 metal-dependent hydrolase Pisl_0803 (225 aa).

The protein belongs to the UPF0173 family.

This Pyrobaculum islandicum (strain DSM 4184 / JCM 9189 / GEO3) protein is UPF0173 metal-dependent hydrolase Pisl_0803.